Consider the following 225-residue polypeptide: UPF0758 protein NMC1174 (225 aa).

Positions 102-224 constitute an MPN domain; sequence VLSDPDTVAD…VRSFRQLGLM (123 aa). Residues histidine 173, histidine 175, and aspartate 186 each coordinate Zn(2+). Positions 173–186 match the JAMM motif motif; sequence HNHPGGSPEPSQED.

Belongs to the UPF0758 family.

The sequence is that of UPF0758 protein NMC1174 from Neisseria meningitidis serogroup C / serotype 2a (strain ATCC 700532 / DSM 15464 / FAM18).